Consider the following 605-residue polypeptide: Membrane protein insertase YidC (605 aa).

A helical transmembrane segment spans residues 8-28 (MIIAIALSLAVLLGWNYFVAA). Over residues 35 to 47 (RQQQAQTSASPSP) the composition is skewed to low complexity. The disordered stretch occupies residues 35–71 (RQQQAQTSASPSPKEGGPSAPVPGTLPGASGGNPQAA). The next 4 helical transmembrane spans lie at 377–397 (LFGN…LFFL), 451–471 (WPVV…FVTI), 496–516 (LFGL…WPIV), and 540–560 (FTFM…GLVI).

It belongs to the OXA1/ALB3/YidC family. Type 1 subfamily. In terms of assembly, interacts with the Sec translocase complex via SecD. Specifically interacts with transmembrane segments of nascent integral membrane proteins during membrane integration.

It is found in the cell inner membrane. Its function is as follows. Required for the insertion and/or proper folding and/or complex formation of integral membrane proteins into the membrane. Involved in integration of membrane proteins that insert both dependently and independently of the Sec translocase complex, as well as at least some lipoproteins. Aids folding of multispanning membrane proteins. This Methylobacterium nodulans (strain LMG 21967 / CNCM I-2342 / ORS 2060) protein is Membrane protein insertase YidC.